The chain runs to 177 residues: Dual-action ribosomal maturation protein DarP (177 aa).

It belongs to the DarP family.

The protein resides in the cytoplasm. Functionally, member of a network of 50S ribosomal subunit biogenesis factors which assembles along the 30S-50S interface, preventing incorrect 23S rRNA structures from forming. Promotes peptidyl transferase center (PTC) maturation. In Histophilus somni (strain 2336) (Haemophilus somnus), this protein is Dual-action ribosomal maturation protein DarP.